The sequence spans 492 residues: MTDLTSLTLAEARDGLAKKSFTALQLTDAHLAAIEAARVLNAYVLETPEQARAMAKAADERIARGAAGPLEGLPLGIKDLFATQGVRTTACSKILGEFSPPYESTVSAQLWRDGAVLLGKLNNDEFAMGSSNETSCFGPVVNPWRREGSDAKLVPGGSSGGSASAVAAGLCLGATATDTGGSIRQPAAFTGTVGIKPTYGRCSRWGIVAFASSLDQAGPIARTVRDAAILLRSMAGHDPKDTTSVDRAVPDYEAAIGRSVKGMKIGIPKEYRIDGMPAEIEALWKQGADWLKAAGAELVEVSLPHTKYALPAYYIVAPAEASSNLARYDGVRYGARVNGRNIVEMYENTRAAGFGAEVKRRIMIGTYVLSAGYYDAYYLRAQKVRTLIKRDFEECFAKGVSAILTPATPSAAFGIGEKGGADPVEMYLNDIFTVTVNMAGLPGIAVPAGKDAQGLPLGLQLIGRPFDEDTLFSLGEVIEQAAGRFTPTKWWA.

Catalysis depends on charge relay system residues lysine 78 and serine 158. Residue serine 182 is the Acyl-ester intermediate of the active site.

This sequence belongs to the amidase family. GatA subfamily. In terms of assembly, heterotrimer of A, B and C subunits.

The catalysed reaction is L-glutamyl-tRNA(Gln) + L-glutamine + ATP + H2O = L-glutaminyl-tRNA(Gln) + L-glutamate + ADP + phosphate + H(+). In terms of biological role, allows the formation of correctly charged Gln-tRNA(Gln) through the transamidation of misacylated Glu-tRNA(Gln) in organisms which lack glutaminyl-tRNA synthetase. The reaction takes place in the presence of glutamine and ATP through an activated gamma-phospho-Glu-tRNA(Gln). The protein is Glutamyl-tRNA(Gln) amidotransferase subunit A of Rhodopseudomonas palustris (strain BisA53).